The primary structure comprises 181 residues: Malignant T-cell-amplified sequence 1 (181 aa).

The PUA domain occupies 92-171; that stretch reads LPHQQVDKGA…IGIENVHYLN (80 aa).

The protein belongs to the MCTS1 family.

The protein localises to the cytoplasm. Functionally, plays a role as translation enhancer and involved in cell cycle regulation. This Danio rerio (Zebrafish) protein is Malignant T-cell-amplified sequence 1 (mcts1).